The primary structure comprises 107 residues: Protein p13 MTCP-1 (107 aa).

The protein belongs to the TCL1 family. In terms of assembly, interacts with AKT1 and AKT2 (via PH domain). Does not interact with AKT3. Not found at a significant level in any tissue.

Enhances the phosphorylation and activation of AKT1 and AKT2. This is Protein p13 MTCP-1 (Mtcp1) from Mus musculus (Mouse).